An 836-amino-acid polypeptide reads, in one-letter code: Pentatricopeptide repeat-containing protein At1g79490, mitochondrial (836 aa).

The transit peptide at 1 to 85 directs the protein to the mitochondrion; the sequence is MIRGRTAKVI…QCRSIVRRFC (85 aa). 12 PPR repeats span residues 204–238, 242–276, 277–311, 312–346, 347–381, 382–416, 417–451, 452–486, 487–521, 528–555, 556–590, and 591–625; these read SDEC…SSSH, SFNA…GCKI, DTQT…DSLL, DGST…KLRP, SFSV…GHRP, SATM…GFRP, NFGL…GFLP, TPST…GLRP, GLSS…GYSV, VLMI…GIKT, NNFI…AGKV, and DLVL…KHKA. One can recognise a Smr domain in the interval 710-786; sequence LDVRNLSVGA…APGELVMEWF (77 aa).

This sequence belongs to the PPR family. P subfamily.

It is found in the mitochondrion. This Arabidopsis thaliana (Mouse-ear cress) protein is Pentatricopeptide repeat-containing protein At1g79490, mitochondrial (EMB2217).